Here is a 250-residue protein sequence, read N- to C-terminus: Methylthioribulose-1-phosphate dehydratase (250 aa).

Zn(2+)-binding residues include His-103 and His-105.

It belongs to the aldolase class II family. MtnB subfamily. It depends on Zn(2+) as a cofactor.

It catalyses the reaction 5-(methylsulfanyl)-D-ribulose 1-phosphate = 5-methylsulfanyl-2,3-dioxopentyl phosphate + H2O. It functions in the pathway amino-acid biosynthesis; L-methionine biosynthesis via salvage pathway; L-methionine from S-methyl-5-thio-alpha-D-ribose 1-phosphate: step 2/6. Its function is as follows. Catalyzes the dehydration of methylthioribulose-1-phosphate (MTRu-1-P) into 2,3-diketo-5-methylthiopentyl-1-phosphate (DK-MTP-1-P). The polypeptide is Methylthioribulose-1-phosphate dehydratase (Leptospira borgpetersenii serovar Hardjo-bovis (strain JB197)).